Here is an 86-residue protein sequence, read N- to C-terminus: MKVSVLITLAVLGVMFVWASAAELEERGSDQRDSPAWLKSMERIFQSGERECRKMFGGCSVDSDCCAHLGCKPTLKYCAWDGTFGK.

The N-terminal stretch at 1–21 (MKVSVLITLAVLGVMFVWASA) is a signal peptide. A propeptide spanning residues 22–50 (AELEERGSDQRDSPAWLKSMERIFQSGER) is cleaved from the precursor. Disulfide bonds link C52-C66, C59-C71, and C65-C78. The segment at 55–56 (MF) is involved in active face. Residue F84 is modified to Phenylalanine amide.

The protein belongs to the neurotoxin 10 (Hwtx-1) family. 28 (Jztx-11) subfamily. Expressed by the venom gland.

The protein localises to the secreted. In terms of biological role, this toxin acts as a voltage-dependent gating-modifier. It inhibits the sodium conductance (IC(50)=124 nM) and slows the fast inactivation (EC(50)=1180 nM) of Nav1.5/SCN5A. It significantly shifts the activation to more depolarized voltages and decreases the deactivation of Nav1.5 currents upon extreme depolarization, but only slightly affects voltage-dependence of steady-state inactivation. In addition, this toxin causes an approximately five-fold decrease in the rate of recovery from inactivation and an approximately 1.9-fold reduction in the closed-state inactivation rate. This toxin integrates the functions of site 3 toxins (alpha-scorpion toxins) with site 4 toxins (beta-scorpion and spider toxins) by targeting multiple sites on Nav1.5. Also shows inhibition of voltage-gated potassium channels (5 uM completely inhibits Kv2.1/KCNB1, whereas 5 uM moderately inhibits Kv4.2/KCND2 Kv4.1/KCND1 channels). In Chilobrachys guangxiensis (Chinese earth tiger tarantula), this protein is Kappa-theraphotoxin-Cg1a 1.